Here is a 427-residue protein sequence, read N- to C-terminus: Enolase (427 aa).

A (2R)-2-phosphoglycerate-binding site is contributed by Q163. E205 acts as the Proton donor in catalysis. Positions 242, 285, and 312 each coordinate Mg(2+). 4 residues coordinate (2R)-2-phosphoglycerate: K337, R366, S367, and K388. The active-site Proton acceptor is the K337.

It belongs to the enolase family. Requires Mg(2+) as cofactor.

The protein localises to the cytoplasm. It is found in the secreted. Its subcellular location is the cell surface. It carries out the reaction (2R)-2-phosphoglycerate = phosphoenolpyruvate + H2O. It functions in the pathway carbohydrate degradation; glycolysis; pyruvate from D-glyceraldehyde 3-phosphate: step 4/5. Functionally, catalyzes the reversible conversion of 2-phosphoglycerate (2-PG) into phosphoenolpyruvate (PEP). It is essential for the degradation of carbohydrates via glycolysis. The polypeptide is Enolase (Dechloromonas aromatica (strain RCB)).